Here is a 557-residue protein sequence, read N- to C-terminus: Urocanate hydratase (557 aa).

NAD(+) is bound by residues 53-54 (GG), Gln131, 177-179 (GMG), Glu197, Arg202, 243-244 (NA), 264-268 (QTSAH), 274-275 (YL), and Tyr323. The active site involves Cys411. Residues 445-464 (LDSGSVSSPNRETESMRDGS) form a disordered region. Residues 455 to 464 (RETESMRDGS) show a composition bias toward basic and acidic residues. Residue Gly493 participates in NAD(+) binding.

The protein belongs to the urocanase family. Requires NAD(+) as cofactor.

The protein resides in the cytoplasm. It carries out the reaction 4-imidazolone-5-propanoate = trans-urocanate + H2O. Its pathway is amino-acid degradation; L-histidine degradation into L-glutamate; N-formimidoyl-L-glutamate from L-histidine: step 2/3. Its function is as follows. Catalyzes the conversion of urocanate to 4-imidazolone-5-propionate. The sequence is that of Urocanate hydratase from Pseudomonas putida (strain W619).